Consider the following 171-residue polypeptide: Replication restart protein PriC (171 aa).

Belongs to the PriC family. Monomer. Component of the replication restart primosome, which is composed of PriA, PriB, PriC, DnaBe and DnaT; DnaG primase associates transiently with this complex. Interacts with the C-terminus of SSB. SSB interaction is required to load the main replicative helicase onto substrate replication forks. Interacts with helicase DnaB alone and in the DnaB-DnaC complex, probably 1:1 binding with DnaB.

Functionally, involved in the restart of stalled replication forks, which reloads the DnaB replicative helicase on sites other than the origin of replication. In vitro can load (E.coli) DnaB replicative helicase from a DnaB-DnaC complex on a single-stranded DNA (ssDNA)-binding protein (SSB)-coated stalled replication fork with no leading- or lagging-strand in the absence of other primosome proteins (PriA, PriB or DnaT). Binds SSB (tested with E.coli protein) and ssDNA. Complements priC in an E.coli priB-priC double deletion. In Cronobacter sakazakii (strain ATCC BAA-894) (Enterobacter sakazakii), this protein is Replication restart protein PriC.